Consider the following 271-residue polypeptide: MKRYVFMLSDGTGITAETLGNSLITQFENIQFEKITIPYIDSTHRAESVVLRINQCFSEQGTKPLVFMTLVDPEIRQAIKKAHACVFDLFSIFIGPLENELEEKSSYTVGRTHGVANVKSYSHRIEAIDFALSHDDGIKTRGYDKADIILIGVSRCGKTPSCLYMALQYGILAANYPFTEEDLVGFRLPEVLRPYKQKLFGLTIDAQRLQQIRSERRPNSKYASAEQCRLEVTEVEAMYQRENIPYINSTKYSIEEISTKVLAIAGLQRKI.

152–159 lines the ADP pocket; it reads GVSRCGKT.

Belongs to the pyruvate, phosphate/water dikinase regulatory protein family. PSRP subfamily.

The enzyme catalyses [pyruvate, water dikinase] + ADP = [pyruvate, water dikinase]-phosphate + AMP + H(+). It carries out the reaction [pyruvate, water dikinase]-phosphate + phosphate + H(+) = [pyruvate, water dikinase] + diphosphate. Bifunctional serine/threonine kinase and phosphorylase involved in the regulation of the phosphoenolpyruvate synthase (PEPS) by catalyzing its phosphorylation/dephosphorylation. The polypeptide is Putative phosphoenolpyruvate synthase regulatory protein (Legionella pneumophila (strain Corby)).